The chain runs to 629 residues: Transmembrane 9 superfamily protein C1105.08 (629 aa).

Positions 1-26 (MLLPSIPSCSFSFVVFVSVLLQTCFS) are cleaved as a signal peptide. The Lumenal portion of the chain corresponds to 27–266 (FQLTPLSPKN…MHIESRQIRW (240 aa)). Residue asparagine 157 is glycosylated (N-linked (GlcNAc...) asparagine). The chain crosses the membrane as a helical span at residues 267 to 287 (IFIIHSAIIDTFLIFVVSIIL). At 288 to 337 (YRTLNRDINKYNSAFVDQEDVQEDFGWKLVHGDVFRPPRRPMLFSILLGT) the chain is on the cytoplasmic side. Residues 338-358 (GAQLLFMSSGIVLFAIFGIVA) form a helical membrane-spanning segment. The Lumenal portion of the chain corresponds to 359-364 (PSRRGS). Residues 365–385 (LATATVALFIISGFVSGYVSA) form a helical membrane-spanning segment. The Cytoplasmic portion of the chain corresponds to 386-401 (LSYKLMQGMLRKRNLL). A helical transmembrane segment spans residues 402 to 422 (LTPFVVPGFMLAAALFFNMVF). Residues 423 to 436 (WSKSSSSTVPFSSW) lie on the Lumenal side of the membrane. The chain crosses the membrane as a helical span at residues 437–457 (LLLIFLYLLFTVPLSFVGSLI). Over 458–488 (GFRSREFVPPVRTNQIPRQIPSHSIWLSSFP) the chain is Cytoplasmic. Residues 489–509 (SAIIGGSIPFLVILIELFSIL) traverse the membrane as a helical segment. Over 510–519 (DSLWFHPLYF) the chain is Lumenal. The helical transmembrane segment at 520–544 (MFGFSFFCFGILVTTCIMVSIITVY) threads the bilayer. Residues 545 to 558 (FQLCSENYNWWWRS) are Cytoplasmic-facing. Residues 559–579 (FITPGFCGIYVFIFSVFYWFF) traverse the membrane as a helical segment. The Lumenal segment spans residues 580–598 (KISSSSLATAVLYFGYSLL). Residues 599-619 (ISVLVFFLCGSVGFFGAFLFV) form a helical membrane-spanning segment. Residues 620–629 (NKIYASIKID) lie on the Cytoplasmic side of the membrane.

This sequence belongs to the nonaspanin (TM9SF) (TC 9.A.2) family.

It localises to the golgi apparatus membrane. The protein localises to the vacuole membrane. The sequence is that of Transmembrane 9 superfamily protein C1105.08 from Schizosaccharomyces pombe (strain 972 / ATCC 24843) (Fission yeast).